The sequence spans 312 residues: Malate dehydrogenase (312 aa).

NAD(+) contacts are provided by residues 7–12 and aspartate 32; that span reads GAGNVG. Substrate is bound by residues arginine 82 and arginine 88. NAD(+)-binding positions include asparagine 95 and 118–120; that span reads VSN. Asparagine 120 and arginine 151 together coordinate substrate. The active-site Proton acceptor is the histidine 175.

The protein belongs to the LDH/MDH superfamily. MDH type 3 family.

It catalyses the reaction (S)-malate + NAD(+) = oxaloacetate + NADH + H(+). Its function is as follows. Catalyzes the reversible oxidation of malate to oxaloacetate. This Cytophaga hutchinsonii (strain ATCC 33406 / DSM 1761 / CIP 103989 / NBRC 15051 / NCIMB 9469 / D465) protein is Malate dehydrogenase.